An 89-amino-acid chain; its full sequence is Small ribosomal subunit protein uS15 (89 aa).

Belongs to the universal ribosomal protein uS15 family. In terms of assembly, part of the 30S ribosomal subunit. Forms a bridge to the 50S subunit in the 70S ribosome, contacting the 23S rRNA.

Functionally, one of the primary rRNA binding proteins, it binds directly to 16S rRNA where it helps nucleate assembly of the platform of the 30S subunit by binding and bridging several RNA helices of the 16S rRNA. Its function is as follows. Forms an intersubunit bridge (bridge B4) with the 23S rRNA of the 50S subunit in the ribosome. The protein is Small ribosomal subunit protein uS15 of Gloeobacter violaceus (strain ATCC 29082 / PCC 7421).